A 152-amino-acid polypeptide reads, in one-letter code: Nucleoside diphosphate kinase B (152 aa).

Positions 1-66 (MAHAERTFIA…DRPFFPGLVK (66 aa)) are interaction with AKAP13. ATP contacts are provided by Lys-12, Phe-60, Arg-88, Thr-94, Arg-105, and Asn-115. Residue His-118 is the Pros-phosphohistidine intermediate of the active site.

The protein belongs to the NDK family. Hexamer of two different chains: An and B (A6, A5B, A4B2, A3B3, A2B4, AB5, B6). Interacts with CAPN8. Interacts with AKAP13. Interacts with ITGB1BP1 (via C-terminal domain region). Interacts with BCL2L10. Mg(2+) serves as cofactor.

Its subcellular location is the cytoplasm. It localises to the cell projection. The protein localises to the lamellipodium. It is found in the ruffle. The protein resides in the nucleus. It catalyses the reaction a 2'-deoxyribonucleoside 5'-diphosphate + ATP = a 2'-deoxyribonucleoside 5'-triphosphate + ADP. It carries out the reaction a ribonucleoside 5'-diphosphate + ATP = a ribonucleoside 5'-triphosphate + ADP. The catalysed reaction is ATP + protein L-histidine = ADP + protein N-phospho-L-histidine.. Functionally, major role in the synthesis of nucleoside triphosphates other than ATP. The ATP gamma phosphate is transferred to the NDP beta phosphate via a ping-pong mechanism, using a phosphorylated active-site intermediate. Negatively regulates Rho activity by interacting with AKAP13/LBC. Acts as a transcriptional activator of the MYC gene; binds DNA non-specifically. Binds to both single-stranded guanine- and cytosine-rich strands within the nuclease hypersensitive element (NHE) III(1) region of the MYC gene promoter. Does not bind to duplex NHE III(1). Has G-quadruplex (G4) DNA-binding activity, which is independent of its nucleotide-binding and kinase activity. Binds both folded and unfolded G4 with similar low nanomolar affinities. Stabilizes folded G4s regardless of whether they are prefolded or not. Exhibits histidine protein kinase activity. The polypeptide is Nucleoside diphosphate kinase B (NME2) (Bos taurus (Bovine)).